The sequence spans 318 residues: N-acetyl-gamma-glutamyl-phosphate reductase (318 aa).

Cysteine 132 is a catalytic residue.

Belongs to the NAGSA dehydrogenase family. Type 1 subfamily.

The protein resides in the cytoplasm. It carries out the reaction N-acetyl-L-glutamate 5-semialdehyde + phosphate + NADP(+) = N-acetyl-L-glutamyl 5-phosphate + NADPH + H(+). The protein operates within amino-acid biosynthesis; L-arginine biosynthesis; N(2)-acetyl-L-ornithine from L-glutamate: step 3/4. Its function is as follows. Catalyzes the NADPH-dependent reduction of N-acetyl-5-glutamyl phosphate to yield N-acetyl-L-glutamate 5-semialdehyde. The protein is N-acetyl-gamma-glutamyl-phosphate reductase of Azobacteroides pseudotrichonymphae genomovar. CFP2.